The chain runs to 662 residues: MRGAGPSPRHSPRALRPDPGPAMSFFRRKVKGKEQEKTLDVKSTKASVAVHSPQKSTKNHALLEAAGPSHVAINAISANMDSFSSSRTATLKKQPSHMEAAHFGDLGRSCLDYQTQETKSSLSKTLEQVLRDTVVLPYFLQFMELRRMEHLVKFWLEAESFHSTTWSRIRAHSLNTVKQSSLAEPVSPSKRHETPASSVTEALDRRLGDSSSAPLLVTQSEGTDLSSRTQNPQNHLLLSQEGHSARSLHREVARTGSHQIPTDSQDSSSRLAVGSRNSCSSPLRELSEKLMKSIEQDAVNTFTKYISPDAAKPIPITEAMRNDIIAKICGEDGQVDPNCFVLAQAVVFSAMEQEHFSEFLRSHHFCKYQIEVLTSGTVYLADILFCESALFYFSEYMEKEDAVNILQFWLAADNFQSQLAAKKGQYDGQEAQNDAMILYDKYFSLQATHPLGFDDVVRLEIESNICREGGPLPNCFTTPLRQAWTTMEKVFLPGFLSSNLYYKYLNDLIHSVRGDEFLGGNVSLAAHGSVCLPEESHSGGSDGSTAQSSVKKASIKILKNFDEAIIVDAASLDPESLYQRTYAGKMSFGRVSDLGQFIRESEPEPDVKKSKGFMFSQAMKKWVQGNTDEAQEELAWKIAKMIVSDVMQQAHHDQPLEKSTKL.

A mitochondrion-targeting transit peptide spans 1 to 28; that stretch reads MRGAGPSPRHSPRALRPDPGPAMSFFRR. Disordered regions lie at residues 1–55, 178–205, and 242–280; these read MRGA…SPQK, KQSS…ALDR, and GHSA…NSCS. Basic and acidic residues predominate over residues 32-43; the sequence is GKEQEKTLDVKS. Phosphoserine occurs at positions 52 and 189. RGS domains lie at 125-369 and 379-505; these read TLEQ…CKYQ and YLAD…YKYL. Positions 256-280 are enriched in polar residues; sequence GSHQIPTDSQDSSSRLAVGSRNSCS. Serine 281 bears the Phosphoserine mark. Residues 634 to 647 form a PKA-RII subunit binding region; sequence LAWKIAKMIVSDVM.

Highly expressed in testis, kidney and lung, followed by brain, skeletal muscle, liver, spleen and heart. Also expressed in brown adipose tissue and pancreas.

It is found in the mitochondrion. It localises to the membrane. The protein localises to the cytoplasm. In terms of biological role, differentially targeted protein that binds to type I and II regulatory subunits of protein kinase A and anchors them to the mitochondria or the plasma membrane. Although the physiological relevance between PKA and AKAPS with mitochondria is not fully understood, one idea is that BAD, a proapoptotic member, is phosphorylated and inactivated by mitochondria-anchored PKA. It cannot be excluded too that it may facilitate PKA as well as G protein signal transduction, by acting as an adapter for assembling multiprotein complexes. With its RGS domain, it could lead to the interaction to G-alpha proteins, providing a link between the signaling machinery and the downstream kinase. The polypeptide is A-kinase anchor protein 10, mitochondrial (Akap10) (Mus musculus (Mouse)).